Reading from the N-terminus, the 151-residue chain is MTRAGFTALDDELKTLKTVERPAVIRSIAEAREHGDLSENAEYHAAREKQSFIEGRIKELEAILSLAEVIDPAKLSGSIKFGATVTILDEETEEERTYQIVGEAEADIEAGLLNIKSPLARALIGKDEGDSIEVKTPGGERGYEVVSVRFV.

Positions 41–62 (AEYHAAREKQSFIEGRIKELEA) form a coiled coil.

Belongs to the GreA/GreB family.

Necessary for efficient RNA polymerase transcription elongation past template-encoded arresting sites. The arresting sites in DNA have the property of trapping a certain fraction of elongating RNA polymerases that pass through, resulting in locked ternary complexes. Cleavage of the nascent transcript by cleavage factors such as GreA or GreB allows the resumption of elongation from the new 3'terminus. GreA releases sequences of 2 to 3 nucleotides. This chain is Transcription elongation factor GreA, found in Cereibacter sphaeroides (strain ATCC 17023 / DSM 158 / JCM 6121 / CCUG 31486 / LMG 2827 / NBRC 12203 / NCIMB 8253 / ATH 2.4.1.) (Rhodobacter sphaeroides).